An 807-amino-acid polypeptide reads, in one-letter code: AP-5 complex subunit zeta-1 (807 aa).

In terms of assembly, probably part of the adaptor protein complex 5 (AP-5) a tetramer composed of AP5B1, AP5M1, AP5S1 and AP5Z1. Interacts with ZFYVE26 and SPG11.

The protein resides in the cytoplasm. The protein localises to the nucleus. Its function is as follows. As part of AP-5, a probable fifth adaptor protein complex it may be involved in endosomal transport. According to PubMed:20613862 it is a putative helicase required for efficient homologous recombination DNA double-strand break repair. This Homo sapiens (Human) protein is AP-5 complex subunit zeta-1 (AP5Z1).